A 343-amino-acid polypeptide reads, in one-letter code: 2,3,4,5-tetrahydropyridine-2,6-dicarboxylate N-succinyltransferase (343 aa).

Mg(2+) is bound at residue Glu204. Glu220 serves as the catalytic Acyl-anhydride intermediate. Succinyl-CoA contacts are provided by residues Arg222, Gly237, Ser240, Ala263, 278–279 (ES), Gly286, Lys303, and 316–319 (RRNS).

Belongs to the type 2 tetrahydrodipicolinate N-succinyltransferase family. In terms of assembly, homotrimer.

The protein resides in the cytoplasm. It catalyses the reaction (S)-2,3,4,5-tetrahydrodipicolinate + succinyl-CoA + H2O = (S)-2-succinylamino-6-oxoheptanedioate + CoA. It participates in amino-acid biosynthesis; L-lysine biosynthesis via DAP pathway; LL-2,6-diaminopimelate from (S)-tetrahydrodipicolinate (succinylase route): step 1/3. In terms of biological role, catalyzes the conversion of the cyclic tetrahydrodipicolinate (THDP) into the acyclic N-succinyl-L-2-amino-6-oxopimelate using succinyl-CoA. This Vibrio cholerae serotype O1 (strain ATCC 39315 / El Tor Inaba N16961) protein is 2,3,4,5-tetrahydropyridine-2,6-dicarboxylate N-succinyltransferase.